We begin with the raw amino-acid sequence, 273 residues long: Proteasome subunit alpha (273 aa).

Positions D231–S273 are disordered. Over residues P238 to A249 the composition is skewed to low complexity.

Belongs to the peptidase T1A family. As to quaternary structure, the 20S proteasome core is composed of 14 alpha and 14 beta subunits that assemble into four stacked heptameric rings, resulting in a barrel-shaped structure. The two inner rings, each composed of seven catalytic beta subunits, are sandwiched by two outer rings, each composed of seven alpha subunits. The catalytic chamber with the active sites is on the inside of the barrel. Has a gated structure, the ends of the cylinder being occluded by the N-termini of the alpha-subunits. Is capped by the proteasome-associated ATPase, ARC.

It localises to the cytoplasm. It participates in protein degradation; proteasomal Pup-dependent pathway. With respect to regulation, the formation of the proteasomal ATPase ARC-20S proteasome complex, likely via the docking of the C-termini of ARC into the intersubunit pockets in the alpha-rings, may trigger opening of the gate for substrate entry. Interconversion between the open-gate and close-gate conformations leads to a dynamic regulation of the 20S proteasome proteolysis activity. Its function is as follows. Component of the proteasome core, a large protease complex with broad specificity involved in protein degradation. The protein is Proteasome subunit alpha of Salinispora arenicola (strain CNS-205).